The chain runs to 473 residues: Ribulose bisphosphate carboxylase large chain (473 aa).

Asn116 and Thr166 together coordinate substrate. Lys168 functions as the Proton acceptor in the catalytic mechanism. Lys170 is a binding site for substrate. Residues Lys194, Asp196, and Glu197 each coordinate Mg(2+). The residue at position 194 (Lys194) is an N6-carboxylysine. His287 functions as the Proton acceptor in the catalytic mechanism. The substrate site is built by Arg288, His320, and Ser372.

This sequence belongs to the RuBisCO large chain family. Type I subfamily. Heterohexadecamer of 8 large chains and 8 small chains. The cofactor is Mg(2+).

It carries out the reaction 2 (2R)-3-phosphoglycerate + 2 H(+) = D-ribulose 1,5-bisphosphate + CO2 + H2O. It catalyses the reaction D-ribulose 1,5-bisphosphate + O2 = 2-phosphoglycolate + (2R)-3-phosphoglycerate + 2 H(+). Functionally, ruBisCO catalyzes two reactions: the carboxylation of D-ribulose 1,5-bisphosphate, the primary event in carbon dioxide fixation, as well as the oxidative fragmentation of the pentose substrate. Both reactions occur simultaneously and in competition at the same active site. This is Ribulose bisphosphate carboxylase large chain from Nitrosomonas europaea (strain ATCC 19718 / CIP 103999 / KCTC 2705 / NBRC 14298).